We begin with the raw amino-acid sequence, 568 residues long: Urease subunit beta (568 aa).

The region spanning 131–568 is the Urease domain; it reads GGIDTHIHFI…LSLAQLYNLF (438 aa). His136, His138, and Lys219 together coordinate Ni(2+). Residue Lys219 is modified to N6-carboxylysine. His221 contacts substrate. Ni(2+)-binding residues include His248 and His274. His321 acts as the Proton donor in catalysis. Asp361 serves as a coordination point for Ni(2+).

It belongs to the metallo-dependent hydrolases superfamily. Urease alpha subunit family. In terms of assembly, heterohexamer of 3 UreA (alpha) and 3 UreB (beta) subunits. Requires Ni cation as cofactor. Carboxylation allows a single lysine to coordinate two nickel ions.

The protein resides in the cytoplasm. It carries out the reaction urea + 2 H2O + H(+) = hydrogencarbonate + 2 NH4(+). It functions in the pathway nitrogen metabolism; urea degradation; CO(2) and NH(3) from urea (urease route): step 1/1. In Helicobacter heilmannii, this protein is Urease subunit beta.